Consider the following 343-residue polypeptide: Heat-inducible transcription repressor HrcA (343 aa).

It belongs to the HrcA family.

In terms of biological role, negative regulator of class I heat shock genes (grpE-dnaK-dnaJ and groELS operons). Prevents heat-shock induction of these operons. In Bacillus licheniformis (strain ATCC 14580 / DSM 13 / JCM 2505 / CCUG 7422 / NBRC 12200 / NCIMB 9375 / NCTC 10341 / NRRL NRS-1264 / Gibson 46), this protein is Heat-inducible transcription repressor HrcA.